Here is a 179-residue protein sequence, read N- to C-terminus: ATP synthase subunit delta (179 aa).

The protein belongs to the ATPase delta chain family. As to quaternary structure, F-type ATPases have 2 components, F(1) - the catalytic core - and F(0) - the membrane proton channel. F(1) has five subunits: alpha(3), beta(3), gamma(1), delta(1), epsilon(1). F(0) has three main subunits: a(1), b(2) and c(10-14). The alpha and beta chains form an alternating ring which encloses part of the gamma chain. F(1) is attached to F(0) by a central stalk formed by the gamma and epsilon chains, while a peripheral stalk is formed by the delta and b chains.

The protein localises to the cell inner membrane. In terms of biological role, f(1)F(0) ATP synthase produces ATP from ADP in the presence of a proton or sodium gradient. F-type ATPases consist of two structural domains, F(1) containing the extramembraneous catalytic core and F(0) containing the membrane proton channel, linked together by a central stalk and a peripheral stalk. During catalysis, ATP synthesis in the catalytic domain of F(1) is coupled via a rotary mechanism of the central stalk subunits to proton translocation. This protein is part of the stalk that links CF(0) to CF(1). It either transmits conformational changes from CF(0) to CF(1) or is implicated in proton conduction. This is ATP synthase subunit delta from Bordetella avium (strain 197N).